We begin with the raw amino-acid sequence, 465 residues long: Ribulose bisphosphate carboxylase large chain (465 aa).

Position 4 is an N6,N6,N6-trimethyllysine (K4). Positions 113 and 163 each coordinate substrate. The Proton acceptor role is filled by K165. K167 contacts substrate. Residues K191, D193, and E194 each coordinate Mg(2+). Position 191 is an N6-carboxylysine (K191). H284 functions as the Proton acceptor in the catalytic mechanism. Substrate is bound by residues R285, H317, and S369.

Belongs to the RuBisCO large chain family. Type I subfamily. As to quaternary structure, heterohexadecamer of 8 large chains and 8 small chains; disulfide-linked. The disulfide link is formed within the large subunit homodimers. Mg(2+) is required as a cofactor. In terms of processing, the disulfide bond which can form in the large chain dimeric partners within the hexadecamer appears to be associated with oxidative stress and protein turnover.

Its subcellular location is the plastid. The protein resides in the chloroplast. The enzyme catalyses 2 (2R)-3-phosphoglycerate + 2 H(+) = D-ribulose 1,5-bisphosphate + CO2 + H2O. It catalyses the reaction D-ribulose 1,5-bisphosphate + O2 = 2-phosphoglycolate + (2R)-3-phosphoglycerate + 2 H(+). In terms of biological role, ruBisCO catalyzes two reactions: the carboxylation of D-ribulose 1,5-bisphosphate, the primary event in carbon dioxide fixation, as well as the oxidative fragmentation of the pentose substrate in the photorespiration process. Both reactions occur simultaneously and in competition at the same active site. The protein is Ribulose bisphosphate carboxylase large chain of Bauera rubioides (Dog rose).